Consider the following 1062-residue polypeptide: Histone H3-lysine(4) N-trimethyltransferase ATX1 (1062 aa).

Residues 159–184 (NAFSGNKQNGSSRRKGSSSKNQDKAT) form a disordered region. A PWWP domain is found at 301–365 (PGDIVWAKLA…VKQAISFIKG (65 aa)). The tract at residues 401–424 (QLQKGADSVDSDMANSTEEGNSGG) is disordered. Residues 441–500 (DFRHIIGDLLIINLGKVVTDSQFFKDENHIWPEGYTAMRKFTSLTDHSASALYKMEVLRD) form the FYR N-terminal domain. The 83-residue stretch at 504-586 (KTHPLFIVTA…RPSSHVSMCK (83 aa)) folds into the FYR C-terminal domain. The segment at 591–647 (RHQNQPTGYRPVRVDWKDLDKCNVCHMDEEYENNLFLQCDKCRMMVHAKCYGELEPC) adopts a Phorbol-ester/DAG-type zinc-finger fold. Residues 599–1062 (YRPVRVDWKD…RCDLIDWTAE (464 aa)) are interaction with PIP5. Residues 609-660 (LDKCNVCHMDEEYENNLFLQCDKCRMMVHAKCYGELEPCDGALWLCNLCRPG) form a PHD-type 1 zinc finger. A C2HC pre-PHD-type zinc finger spans residues 665-698 (PPRCCLCPVVGGAMKPTTDGRWAHLACAIWIPET). A PHD-type 2 zinc finger spans residues 722–785 (LMCTICGVSY…RMLSFCKRHR (64 aa)). One can recognise an SET domain in the interval 898-1016 (KRLAFGKSGI…KWEELTYDYR (119 aa)). An S-adenosyl-L-methionine-binding site is contributed by H908. S947 carries O-linked (GlcNAc) serine glycosylation. S-adenosyl-L-methionine is bound by residues Y954 and 977–978 (NH). C980, C1026, C1028, and C1033 together coordinate Zn(2+). The 17-residue stretch at 1022–1038 (ERLSCSCGFPGCRGVVN) folds into the Post-SET domain.

It belongs to the class V-like SAM-binding methyltransferase superfamily. Histone-lysine methyltransferase family. TRX/MLL subfamily. Interacts with PIP5. Interacts with WDR5A. Binds to CLF in the nucleus. Interacts with NRPB1 CTD domain, especially when NRPB1 is phosphorylated on 'Ser-5' of the heptapeptide repeat. Component of a nuclear protein complex containing at least TATA binding proteins (TBPs, e.g. TBP1 and TBP2) and ATX1. Associates with ULT1 for trimethylating 'Lys-4' on histone H3 (H3K4me3) at flower MADS box gene loci. Interacts with SEC. As to quaternary structure, interacts with A4/EF1A in the cytoplasm on the nuclear periphery. In terms of processing, activated via O-glycosylation by SEC; this modification triggers FLC locus H3K4me3 histone modification, thus preventing premature flowering. Strongly expressed in cotyledons, but weak levels in the first true leaves, except at the hydothodes. Ubiquitous with higher levels in dividing tissues, including inflorescence meristem and flower primordia. Expressed also in leaves (especially at hydathodes), in growing inflorescence stems and in the mature flowers. As to expression, strongly expressed in young seedlings.

It localises to the nucleus. The protein localises to the cytoplasm. It is found in the perinuclear region. It catalyses the reaction L-lysyl(4)-[histone H3] + 3 S-adenosyl-L-methionine = N(6),N(6),N(6)-trimethyl-L-lysyl(4)-[histone H3] + 3 S-adenosyl-L-homocysteine + 3 H(+). The enzyme catalyses L-lysyl-[protein] + 3 S-adenosyl-L-methionine = N(6),N(6),N(6)-trimethyl-L-lysyl-[protein] + 3 S-adenosyl-L-homocysteine + 3 H(+). Binds to the promoter and regulates the transcription of target genes, maintaining them in an active state; at promoters, required for TATA binding proteins (TBPs, e.g. TBP1 and TBP2) and RNA polymerase II (Pol II) recruitment, and, in a subsequent event, is recruited by a phosphorylated form of Pol II to the +300-bp region of transcribed sequences to trimethylates nucleosomes. Histone trimethyltransferase that trimethylates 'Lys-4' of histone H3 (H3K4me3); H3 'Lys-4' methylation represents a specific tag for epigenetic transcriptional activation and is required for efficient elongation of transcription but not for transcription initiation. Methylates only a limited fraction of nucleosomes of target genes (e.g. FLC, NAP, XTH33 and WRKY70). Necessary for WDR5A occupancy at WRKY70 and LTP7 genes. Required to maintain the active state of class A (AP1 and AP2), class B (PI and AP3) and class C (AG, AGAMOUS) floral homeotic genes at early stages of flower development. Together with CLF, modulates AG nucleosome methylation statement. Involved in epigenetic regulation (e.g. H3K4me3) of the floral repressors FLC, FT and SOC1 to prevent the transition from vegetative to reproductive development, independently of the photoperiod; binds the active FLC locus before flowering, but this interaction is released upon the transition to flowering. Regulates floral organ identity and flowering transition. Functions as a receptor for the lipid messenger phosphatidylinositol 5-phosphate (PI5P), which negatively regulates its transcriptional activation activity. Exhibits histone methylase activity and subsequent transcriptional regulation on WRKY70 gene, and, to a lower extent on secondary defense-response targets salicylic acid (SA)-responsive gene PR1 and jasmonic acid (JA)-responsive gene THI2.1. Involved in response to dehydration stress-response in both abscisic acid (ABA)-dependent and ABA-independent pathways; this includes specific genes (e.g. COR15A, ADH1, CBF4, RD29A, RD29B, RD26, ABF3, NCED3 and ABA3) epigenetic regulation (e.g. H3K4me3 and Pol II recruitment) to promote their transcription and influence ABA production. Implicated in stomatal closure regulation. Indirect repressor of XTH genes (XTH33). Necessary for the phosphorylation of Pol II NRPB1 (e.g. Ser5P and Ser2P) at the promoters of target genes, thus regulating both early and late stages of transcription. Controls root growth and architecture by regulating the timing of root development, stem cell niche maintenance (e.g. quiescent center (QC)), and cell patterning during primary and lateral root development. Modulates cell cycle duration, cell production, and the transition from cell proliferation in the root apical meristem (RAM) to cell elongation. Its function is as follows. Trimethylates A4/EF1A post-translationally at Lys-396. Required for actin cytoskeleton organization. This Arabidopsis thaliana (Mouse-ear cress) protein is Histone H3-lysine(4) N-trimethyltransferase ATX1.